The chain runs to 253 residues: Hydroxypyruvate/pyruvate aldolase (253 aa).

His-48 serves as the catalytic Proton acceptor. A divalent metal cation contacts are provided by Glu-151 and Asp-177.

The protein belongs to the HpcH/HpaI aldolase family. A divalent metal cation is required as a cofactor.

The enzyme catalyses D-glyceraldehyde + pyruvate = 2-dehydro-3-deoxy-L-galactonate. Its function is as follows. Aldolase which can catalyze in vitro the aldolisation reaction between hydroxypyruvate (HPA) or pyruvate (PA) and D-glyceraldehyde (D-GA). The condensation of pyruvate and D-glyceraldehyde produces 2-dehydro-3-deoxy-L-galactonate. Has weak activity with hydroxypyruvate and D-glyceraldehyde. The polypeptide is Hydroxypyruvate/pyruvate aldolase (Sagittula stellata (strain ATCC 700073 / DSM 11524 / E-37)).